Reading from the N-terminus, the 273-residue chain is Alcohol dehydrogenase-related 31 kDa protein (273 aa).

11 to 34 (YVADCGGIALETCKVLMTKNIAKL) provides a ligand contact to NAD(+). Ser139 contributes to the substrate binding site. Residue Tyr152 is the Proton acceptor of the active site.

The protein belongs to the short-chain dehydrogenases/reductases (SDR) family.

The sequence is that of Alcohol dehydrogenase-related 31 kDa protein (Adhr) from Drosophila immigrans (Fruit fly).